Reading from the N-terminus, the 975-residue chain is MEVTEANLQLLAGYLQQTLSADPNVRRPAEKLLESTELQQNYPILLLNLIDKAQMDMTTRVAGAIAFKNYIKRNWAAHLDSDGPDRIHESDRNTIKTLIVTLMLHSPVALQKQLSDAVSIIGKYDFPKKWPQLIDEMVERFASGDFNVINGVLQTAHSLFKRYRYEFKSQALWEEIKFVLDRMAKPLTDLLQAKMQLTKVHENNAGALKVIYGSLVLVNKVFFSLNSQDLPEFFEDNINTWMGAFIQQLAADVPSLRTADDEDAGVLEHLRAQVCENICLYAKKYDEEFKPFMEQFVTAVWELLVKTSLHTKYDSLVSHALQFLSVVADRQHYQSIFENPEILAQICDKVVIPNLDIRPSDEEIFEDSPEEYIRRDIEGSDIDTRRRAACDLVKTLSINFEQKIFGIFGQYLERLLTKYKENPATNWRSKDTAIYLVTSWASRGGTQKHGITQTSELVPLPEFCAQQIIPELERPNINEFPVLKAAAIKYVMVFRSILGPQVLASCLPQLIRHLPAESSVVHSYAACSVEKILSMRDASNAIVFGPQILAPYTTELISGLFATLSLPGSGENEYVMKAIMRSFSVLQSAAMPFMGVALPRLTEILTQVAKNPSRPQFNHYLFETLALCIKIVCHADSSAVSSFEEALFPVFQGILQQDIVEFMPYVFQMLSVLLEMREGTGTIPEPYWALFPCLLSPALWDRTGNVTPLIRLISAFIKQGSAQIQALGKLSGILGIFQKMIASKANDHEGFYLLQNLLSYYPPAEIQTNLRQIFGLLFQRLSLSKTPKYLSGIIIFFSFYVIKFSGSQMAQLIDEIQPNLFGMLLDRVFITEMGKIPKEQDRKMVAVGVTKLLTETPEILQQQYATFWPRLLHSLIDLFERPPEKLMGLEIGETAGVAEDPDAGYQVAFAQLTHAQPNQQDHLAEIKDARQFLATSLSKFAQARAGEFSTLLSPLEPEYKQVLQKYCDQAGVRIA.

One can recognise an Importin N-terminal domain in the interval Ala-29–His-105.

It belongs to the XPO2/CSE1 family. As to quaternary structure, binds with high affinity to importin-alpha only in the presence of RanGTP.

The protein resides in the cytoplasm. The protein localises to the nucleus. Functionally, export receptor for importin alpha. Mediates importin-alpha re-export from the nucleus to the cytoplasm after import substrates have been released into the nucleoplasm. This chain is Exportin-2, found in Drosophila melanogaster (Fruit fly).